Reading from the N-terminus, the 157-residue chain is SsrA-binding protein (157 aa).

Residues 131–157 (KQLHDKRESVKQRDWQRDKARLMRDKG) form a disordered region. The segment covering 132–157 (QLHDKRESVKQRDWQRDKARLMRDKG) has biased composition (basic and acidic residues).

It belongs to the SmpB family.

The protein localises to the cytoplasm. Functionally, required for rescue of stalled ribosomes mediated by trans-translation. Binds to transfer-messenger RNA (tmRNA), required for stable association of tmRNA with ribosomes. tmRNA and SmpB together mimic tRNA shape, replacing the anticodon stem-loop with SmpB. tmRNA is encoded by the ssrA gene; the 2 termini fold to resemble tRNA(Ala) and it encodes a 'tag peptide', a short internal open reading frame. During trans-translation Ala-aminoacylated tmRNA acts like a tRNA, entering the A-site of stalled ribosomes, displacing the stalled mRNA. The ribosome then switches to translate the ORF on the tmRNA; the nascent peptide is terminated with the 'tag peptide' encoded by the tmRNA and targeted for degradation. The ribosome is freed to recommence translation, which seems to be the essential function of trans-translation. The chain is SsrA-binding protein from Methylorubrum populi (strain ATCC BAA-705 / NCIMB 13946 / BJ001) (Methylobacterium populi).